The following is a 253-amino-acid chain: Phosphate import ATP-binding protein PstB 1 (253 aa).

Positions leucine 7–isoleucine 248 constitute an ABC transporter domain. Position 39–46 (glycine 39–serine 46) interacts with ATP.

This sequence belongs to the ABC transporter superfamily. Phosphate importer (TC 3.A.1.7) family. In terms of assembly, the complex is composed of two ATP-binding proteins (PstB), two transmembrane proteins (PstC and PstA) and a solute-binding protein (PstS).

Its subcellular location is the cell membrane. The enzyme catalyses phosphate(out) + ATP + H2O = ADP + 2 phosphate(in) + H(+). Functionally, part of the ABC transporter complex PstSACB involved in phosphate import. Responsible for energy coupling to the transport system. The chain is Phosphate import ATP-binding protein PstB 1 from Streptococcus pyogenes serotype M12 (strain MGAS9429).